Here is a 114-residue protein sequence, read N- to C-terminus: Hydrogenase maturation factor HypA (114 aa).

Ni(2+) is bound at residue His-2. Residues Cys-73, Cys-76, Cys-89, and Cys-92 each coordinate Zn(2+).

This sequence belongs to the HypA/HybF family.

Its function is as follows. Involved in the maturation of [NiFe] hydrogenases. Required for nickel insertion into the metal center of the hydrogenase. This is Hydrogenase maturation factor HypA from Syntrophus aciditrophicus (strain SB).